The sequence spans 171 residues: Peptide methionine sulfoxide reductase MsrA (171 aa).

Residue cysteine 13 is part of the active site.

Belongs to the MsrA Met sulfoxide reductase family.

The catalysed reaction is L-methionyl-[protein] + [thioredoxin]-disulfide + H2O = L-methionyl-(S)-S-oxide-[protein] + [thioredoxin]-dithiol. It carries out the reaction [thioredoxin]-disulfide + L-methionine + H2O = L-methionine (S)-S-oxide + [thioredoxin]-dithiol. In terms of biological role, has an important function as a repair enzyme for proteins that have been inactivated by oxidation. Catalyzes the reversible oxidation-reduction of methionine sulfoxide in proteins to methionine. The protein is Peptide methionine sulfoxide reductase MsrA of Mycobacterium sp. (strain MCS).